The following is a 494-amino-acid chain: MRKAAAAAVAAAAAVGVALLVRRQLREAKRWGRADAVLRELEERCAAPPGRLRQVADAMAVEMHAGLASEGGSKLKMIISYVDALPSGEEKGVFYALDLGGTNFRVLRVQLGGKEGRVIKQEHDEISIPPHLMTGGSNELFDFIASSLAKFVASEGEDFHLAEGRQRELGFTFSFPVKQTSIASGTLINWTKGFSIDETVGEDVVTELTKALERQGLDMKVTALINDTIGTLAGGRYDDNDVIAAVILGTGTNAAYVERANAIPKWHDLLPKSGDMVINMEWGNFRSSHLPLTEFDQALDAESLNPGEQVYEKLISGMYLGEIVRRVLLKMAEEASLFGDEVPPKLKIPFIIRTPYMSMMHCDRSPDLRTVGAKLKDILGVQNTSLKTRRLVVDVCDIVAKRAAHLAAAGIHGILKKLGRDVPNTDKQRTVIAVDGGLYEHYTIFAECVESTLRDMLGEDVSSTIVIKLAKDGSGIGAALLAAAHSQYREAEEL.

Residues 32-483 (GRADAVLREL…SGIGAALLAA (452 aa)) form the Hexokinase domain. The interval 87-225 (SGEEKGVFYA…GLDMKVTALI (139 aa)) is hexokinase small subdomain. ADP is bound by residues Gly-101, Thr-102, and Asn-103. D-glucose contacts are provided by Thr-191, Lys-192, Asn-226, and Asp-227. Residues 226-472 (NDTIGTLAGG…STIVIKLAKD (247 aa)) are hexokinase large subdomain. Thr-250 is an ADP binding site. D-glucose-binding residues include Asn-253, Glu-281, and Glu-312. Position 437 (Gly-437) interacts with ADP.

This sequence belongs to the hexokinase family. As to expression, expressed in roots, leaves, flowers, immature seeds, endosperm and seed coat.

The catalysed reaction is a D-hexose + ATP = a D-hexose 6-phosphate + ADP + H(+). It carries out the reaction D-fructose + ATP = D-fructose 6-phosphate + ADP + H(+). It catalyses the reaction D-glucose + ATP = D-glucose 6-phosphate + ADP + H(+). Its pathway is carbohydrate metabolism; hexose metabolism. It functions in the pathway carbohydrate degradation; glycolysis; D-glyceraldehyde 3-phosphate and glycerone phosphate from D-glucose: step 1/4. Fructose and glucose phosphorylating enzyme. This Oryza sativa subsp. japonica (Rice) protein is Hexokinase-2 (HXK2).